A 190-amino-acid polypeptide reads, in one-letter code: Peptidyl-tRNA hydrolase (190 aa).

Tyr-14 contributes to the tRNA binding site. The active-site Proton acceptor is the His-19. 3 residues coordinate tRNA: Tyr-64, Asn-66, and Asn-112.

The protein belongs to the PTH family. Monomer.

The protein resides in the cytoplasm. It catalyses the reaction an N-acyl-L-alpha-aminoacyl-tRNA + H2O = an N-acyl-L-amino acid + a tRNA + H(+). Hydrolyzes ribosome-free peptidyl-tRNAs (with 1 or more amino acids incorporated), which drop off the ribosome during protein synthesis, or as a result of ribosome stalling. In terms of biological role, catalyzes the release of premature peptidyl moieties from peptidyl-tRNA molecules trapped in stalled 50S ribosomal subunits, and thus maintains levels of free tRNAs and 50S ribosomes. The protein is Peptidyl-tRNA hydrolase of Chlorobium phaeovibrioides (strain DSM 265 / 1930) (Prosthecochloris vibrioformis (strain DSM 265)).